A 360-amino-acid chain; its full sequence is UDP-N-acetylglucosamine--N-acetylmuramyl-(pentapeptide) pyrophosphoryl-undecaprenol N-acetylglucosamine transferase (360 aa).

Residues 15–17 (TGG), Asn-127, Arg-163, Ser-191, Ile-249, 268–273 (ALTVSE), and Gln-293 contribute to the UDP-N-acetyl-alpha-D-glucosamine site.

Belongs to the glycosyltransferase 28 family. MurG subfamily.

The protein resides in the cell inner membrane. It catalyses the reaction di-trans,octa-cis-undecaprenyl diphospho-N-acetyl-alpha-D-muramoyl-L-alanyl-D-glutamyl-meso-2,6-diaminopimeloyl-D-alanyl-D-alanine + UDP-N-acetyl-alpha-D-glucosamine = di-trans,octa-cis-undecaprenyl diphospho-[N-acetyl-alpha-D-glucosaminyl-(1-&gt;4)]-N-acetyl-alpha-D-muramoyl-L-alanyl-D-glutamyl-meso-2,6-diaminopimeloyl-D-alanyl-D-alanine + UDP + H(+). The protein operates within cell wall biogenesis; peptidoglycan biosynthesis. Its function is as follows. Cell wall formation. Catalyzes the transfer of a GlcNAc subunit on undecaprenyl-pyrophosphoryl-MurNAc-pentapeptide (lipid intermediate I) to form undecaprenyl-pyrophosphoryl-MurNAc-(pentapeptide)GlcNAc (lipid intermediate II). The chain is UDP-N-acetylglucosamine--N-acetylmuramyl-(pentapeptide) pyrophosphoryl-undecaprenol N-acetylglucosamine transferase from Proteus mirabilis (strain HI4320).